The sequence spans 279 residues: Large ribosomal subunit protein uL2 (279 aa).

The segment at 224–279 is disordered; sequence AMNPIDHPHGGGEGRTSGGRHPVTPWGKGTKGNRTRKSKASDKLIVRSRHAKKKGR. The span at 269–279 shows a compositional bias: basic residues; it reads VRSRHAKKKGR.

Belongs to the universal ribosomal protein uL2 family. Part of the 50S ribosomal subunit. Forms a bridge to the 30S subunit in the 70S ribosome.

In terms of biological role, one of the primary rRNA binding proteins. Required for association of the 30S and 50S subunits to form the 70S ribosome, for tRNA binding and peptide bond formation. It has been suggested to have peptidyltransferase activity; this is somewhat controversial. Makes several contacts with the 16S rRNA in the 70S ribosome. This chain is Large ribosomal subunit protein uL2, found in Cereibacter sphaeroides (strain ATCC 17025 / ATH 2.4.3) (Rhodobacter sphaeroides).